Consider the following 128-residue polypeptide: MQSSPSTLGPGRAADTCQAPPGPERPPVARARAVASSLGPASASGRVPRGLDMSAQETPQGRRFPIEAGDSPGLASAPESQDSPEPVATDQNPVRPLRRCPGCHCLTLLHVPIDVYLAMGGSPRARAT.

The tract at residues 1–96 (MQSSPSTLGP…VATDQNPVRP (96 aa)) is disordered.

It belongs to the FAM229 family.

The polypeptide is Protein FAM229A (Fam229a) (Mus musculus (Mouse)).